Consider the following 994-residue polypeptide: Glutamate [NMDA] receptor subunit 1 (994 aa).

Residues 1 to 23 form the signal peptide; sequence MAADGFVYRWLLFGTTIVLLAEA. Over 24-570 the chain is Extracellular; it reads AQRHTASDNP…TLVSFLQPFS (547 aa). N-linked (GlcNAc...) asparagine glycosylation is found at N255, N311, N342, N394, N451, N478, and N498. Residues 527-529 and R534 contribute to the glycine site; that span reads PLT. A helical membrane pass occupies residues 571–591; that stretch reads NTLWILVMVSVHVVALVLYLL. At 592 to 648 the chain is on the cytoplasmic side; the sequence is DRFSPFGRFKLSHSDSNEEKALNLSSAVWFAWGVLLNSGIGEGTPRSFSARVLGMVW. The helical transmembrane segment at 649–669 threads the bilayer; the sequence is AGFAMIIVASYTANLAAFLVL. The Extracellular segment spans residues 670–828; it reads ERPKTKLSGI…KTPNTLGLKN (159 aa). N690 is a glycosylation site (N-linked (GlcNAc...) asparagine). The glycine site is built by S700 and D744. The chain crosses the membrane as a helical span at residues 829-849; the sequence is MAGVFILVGVGIAGGVGLIII. At 850–994 the chain is on the cytoplasmic side; that stretch reads EVIYKKHQVK…YTSDVSHLVV (145 aa). Residues 971 to 994 are disordered; it reads RPQQNMLPPRYSPGYTSDVSHLVV. A compositionally biased stretch (polar residues) spans 984-994; that stretch reads GYTSDVSHLVV.

Belongs to the glutamate-gated ion channel (TC 1.A.10.1) family. As to quaternary structure, forms a heteromeric NMDA channel with Nmdar2.

The protein resides in the cell membrane. Its subcellular location is the postsynaptic cell membrane. It localises to the postsynaptic density. In terms of biological role, NMDA receptor subtype of glutamate-gated ion channels with high calcium permeability and voltage-dependent sensitivity to magnesium. Mediated by glycine. This protein plays a key role in synaptic plasticity, synaptogenesis, excitotoxicity, memory acquisition and learning. It mediates neuronal functions in glutamate neurotransmission. Is involved in the cell surface targeting of NMDA receptors. Plays a role in associative learning and in long-term memory consolidation. In Drosophila ananassae (Fruit fly), this protein is Glutamate [NMDA] receptor subunit 1.